Here is a 301-residue protein sequence, read N- to C-terminus: Homoserine kinase (301 aa).

81–91 is an ATP binding site; that stretch reads RPSSGLGSSAA.

It belongs to the GHMP kinase family. Homoserine kinase subfamily.

The protein resides in the cytoplasm. It catalyses the reaction L-homoserine + ATP = O-phospho-L-homoserine + ADP + H(+). It functions in the pathway amino-acid biosynthesis; L-threonine biosynthesis; L-threonine from L-aspartate: step 4/5. Catalyzes the ATP-dependent phosphorylation of L-homoserine to L-homoserine phosphate. The chain is Homoserine kinase from Halobacterium salinarum (strain ATCC 29341 / DSM 671 / R1).